Consider the following 423-residue polypeptide: Ferrochelatase, mitochondrial (423 aa).

A mitochondrion-targeting transit peptide spans 1-40 (MIRFCPSCFALKRTAPVLNHTSRLGNYFNNTFSKFSVNRM). C200 is a [2Fe-2S] cluster binding site. D385 is an active-site residue. 3 residues coordinate [2Fe-2S] cluster: C405, C408, and C413.

The protein belongs to the ferrochelatase family. As to quaternary structure, monomer. [2Fe-2S] cluster serves as cofactor.

The protein localises to the mitochondrion inner membrane. It is found in the cytoplasm. It localises to the nucleus. It catalyses the reaction heme b + 2 H(+) = protoporphyrin IX + Fe(2+). The protein operates within porphyrin-containing compound metabolism; protoheme biosynthesis; protoheme from protoporphyrin-IX: step 1/1. Its function is as follows. Catalyzes the ferrous insertion into protoporphyrin IX. This Schizosaccharomyces pombe (strain 972 / ATCC 24843) (Fission yeast) protein is Ferrochelatase, mitochondrial (hem15).